Here is a 265-residue protein sequence, read N- to C-terminus: Glutamate racemase (265 aa).

Residues 10–11 (DS) and 42–43 (YG) contribute to the substrate site. Catalysis depends on Cys-73, which acts as the Proton donor/acceptor. 74 to 75 (NT) contacts substrate. The active-site Proton donor/acceptor is the Cys-184. 185–186 (TH) lines the substrate pocket.

This sequence belongs to the aspartate/glutamate racemases family.

The enzyme catalyses L-glutamate = D-glutamate. It functions in the pathway cell wall biogenesis; peptidoglycan biosynthesis. Provides the (R)-glutamate required for cell wall biosynthesis. This Pediococcus pentosaceus (strain ATCC 25745 / CCUG 21536 / LMG 10740 / 183-1w) protein is Glutamate racemase.